A 341-amino-acid polypeptide reads, in one-letter code: Phenylalanine--tRNA ligase alpha subunit (341 aa).

Glu256 is a binding site for Mg(2+).

This sequence belongs to the class-II aminoacyl-tRNA synthetase family. Phe-tRNA synthetase alpha subunit type 1 subfamily. Tetramer of two alpha and two beta subunits. It depends on Mg(2+) as a cofactor.

Its subcellular location is the cytoplasm. The catalysed reaction is tRNA(Phe) + L-phenylalanine + ATP = L-phenylalanyl-tRNA(Phe) + AMP + diphosphate + H(+). The polypeptide is Phenylalanine--tRNA ligase alpha subunit (Chlamydia abortus (strain DSM 27085 / S26/3) (Chlamydophila abortus)).